The sequence spans 125 residues: Small ribosomal subunit protein uS13 (125 aa).

The disordered stretch occupies residues 92-125 (RRSLPVRGQRTRTNARTRKGKRKTVAGKKKAVKK).

This sequence belongs to the universal ribosomal protein uS13 family. As to quaternary structure, part of the 30S ribosomal subunit. Forms a loose heterodimer with protein S19. Forms two bridges to the 50S subunit in the 70S ribosome.

Its function is as follows. Located at the top of the head of the 30S subunit, it contacts several helices of the 16S rRNA. In the 70S ribosome it contacts the 23S rRNA (bridge B1a) and protein L5 of the 50S subunit (bridge B1b), connecting the 2 subunits; these bridges are implicated in subunit movement. Contacts the tRNAs in the A and P-sites. This is Small ribosomal subunit protein uS13 from Pelodictyon phaeoclathratiforme (strain DSM 5477 / BU-1).